A 115-amino-acid chain; its full sequence is Large ribosomal subunit protein bL19 (115 aa).

It belongs to the bacterial ribosomal protein bL19 family.

Its function is as follows. This protein is located at the 30S-50S ribosomal subunit interface and may play a role in the structure and function of the aminoacyl-tRNA binding site. This chain is Large ribosomal subunit protein bL19, found in Akkermansia muciniphila (strain ATCC BAA-835 / DSM 22959 / JCM 33894 / BCRC 81048 / CCUG 64013 / CIP 107961 / Muc).